The primary structure comprises 396 residues: Elongation factor Tu 2 (396 aa).

Positions 10–206 (KPHVNVGTIG…ALDTYIPTPE (197 aa)) constitute a tr-type G domain. Residues 19 to 26 (GHVDHGKT) form a G1 region. 19 to 26 (GHVDHGKT) provides a ligand contact to GTP. Residue threonine 26 participates in Mg(2+) binding. Residues 60–64 (GITIN) are G2. Residues 81–84 (DCPG) are G3. GTP contacts are provided by residues 81 to 85 (DCPGH) and 136 to 139 (NKCD). The tract at residues 136–139 (NKCD) is G4. The tract at residues 174–176 (SAK) is G5.

It belongs to the TRAFAC class translation factor GTPase superfamily. Classic translation factor GTPase family. EF-Tu/EF-1A subfamily. As to quaternary structure, monomer.

The protein localises to the cytoplasm. The enzyme catalyses GTP + H2O = GDP + phosphate + H(+). In terms of biological role, GTP hydrolase that promotes the GTP-dependent binding of aminoacyl-tRNA to the A-site of ribosomes during protein biosynthesis. This Acidovorax sp. (strain JS42) protein is Elongation factor Tu 2.